Reading from the N-terminus, the 596-residue chain is Aspartate--tRNA(Asp/Asn) ligase (596 aa).

Glu175 contacts L-aspartate. An aspartate region spans residues 199–202 (QQYK). Positions 221 and 454 each coordinate L-aspartate. 221–223 (RDE) lines the ATP pocket. Glu488 is a binding site for ATP. Arg495 is a binding site for L-aspartate. Position 540 to 543 (540 to 543 (GVDR)) interacts with ATP.

This sequence belongs to the class-II aminoacyl-tRNA synthetase family. Type 1 subfamily. As to quaternary structure, homodimer.

Its subcellular location is the cytoplasm. The catalysed reaction is tRNA(Asx) + L-aspartate + ATP = L-aspartyl-tRNA(Asx) + AMP + diphosphate. Aspartyl-tRNA synthetase with relaxed tRNA specificity since it is able to aspartylate not only its cognate tRNA(Asp) but also tRNA(Asn). Reaction proceeds in two steps: L-aspartate is first activated by ATP to form Asp-AMP and then transferred to the acceptor end of tRNA(Asp/Asn). The sequence is that of Aspartate--tRNA(Asp/Asn) ligase from Bartonella bacilliformis (strain ATCC 35685 / KC583 / Herrer 020/F12,63).